The chain runs to 492 residues: MKLLLLHPAFQSCLLLTLLGLWRTTPEAHASSLGAPAISAASFLQDLIHRYGEGDSLTLQQLKALLNHLDVGVGRGNVTQHVQGHRNLSTCFSSGDLFTAHNFSEQSRIGSSELQEFCPTILQQLDSRACTSENQENEENEQTEEGRPSAVEVWGYGLLCVTVISLCSLLGASVVPFMKKTFYKRLLLYFIALAIGTLYSNALFQLIPEAFGFNPLEDYYVSKSAVVFGGFYLFFFTEKILKILLKQKNEHHHGHSHYASESLPSKKDQEEGVMEKLQNGDLDHMIPQHCSSELDGKAPMVDEKVIVGSLSVQDLQASQSACYWLKGVRYSDIGTLAWMITLSDGLHNFIDGLAIGASFTVSVFQGISTSVAILCEEFPHELGDFVILLNAGMSIQQALFFNFLSACCCYLGLAFGILAGSHFSANWIFALAGGMFLYISLADMFPEMNEVCQEDERKGSILIPFIIQNLGLLTGFTIMVVLTMYSGQIQIG.

Residues 1 to 30 form the signal peptide; it reads MKLLLLHPAFQSCLLLTLLGLWRTTPEAHA. Topologically, residues 31 to 157 are extracellular; that stretch reads SSLGAPAISA…PSAVEVWGYG (127 aa). Residues Asn77, Asn87, and Asn102 are each glycosylated (N-linked (GlcNAc...) asparagine). The helical transmembrane segment at 158–178 threads the bilayer; that stretch reads LLCVTVISLCSLLGASVVPFM. The Cytoplasmic portion of the chain corresponds to 179–186; that stretch reads KKTFYKRL. Residues 187–207 traverse the membrane as a helical segment; that stretch reads LLYFIALAIGTLYSNALFQLI. At 208–224 the chain is on the extracellular side; that stretch reads PEAFGFNPLEDYYVSKS. A helical transmembrane segment spans residues 225-245; the sequence is AVVFGGFYLFFFTEKILKILL. The Cytoplasmic portion of the chain corresponds to 246–397; it reads KQKNEHHHGH…LLNAGMSIQQ (152 aa). The HHHGHXHX-motif signature appears at 251–258; that stretch reads HHHGHSHY. An XEXPHE-motif motif is present at residues 376 to 381; sequence EEFPHE. A helical transmembrane segment spans residues 398 to 418; it reads ALFFNFLSACCCYLGLAFGIL. Residues 419–424 lie on the Extracellular side of the membrane; sequence AGSHFS. A helical transmembrane segment spans residues 425–445; the sequence is ANWIFALAGGMFLYISLADMF. Residues 446–460 lie on the Cytoplasmic side of the membrane; sequence PEMNEVCQEDERKGS. Residues 461-481 traverse the membrane as a helical segment; it reads ILIPFIIQNLGLLTGFTIMVV. At 482–492 the chain is on the extracellular side; the sequence is LTMYSGQIQIG.

It belongs to the ZIP transporter (TC 2.A.5) family. In terms of assembly, homotrimer. Ubiquitinated. Ubiquitination occurs upon iron depletion. The ubiquitinated form undergoes proteasomal degradation. In terms of processing, N-glycosylated. N-glycosylation at Asn-102 is required for iron-regulated extraction of the transporter from membranes and subsequent proteasomal degradation. Ubiquitously expressed, with higher expression in liver, pancreas, fetal liver, thyroid gland, left and right ventricle, right atrium and fetal heart. Weakly expressed in spleen, thymus, and peripheral blood leukocytes. Expressed in liver and in brain by large neurons in the globus pallidus, the insular cortex and the dentate nucleus and to a lower extent in the putamen and the caudate nucleus (at protein level). Expressed in osteoblasts and giant osteoclast-like cells, but not in osteocytes found osteoblastoma and giant cell tumors (at protein level). Expressed by microvascular capillary endothelial cells that constitute the blood-brain barrier (at protein level). Expressed by macrophages. In terms of tissue distribution, widely expressed but not detected in brain, heart, skeletal muscle, placenta and fetal skin.

It is found in the cell membrane. Its subcellular location is the apical cell membrane. The protein localises to the basolateral cell membrane. It localises to the early endosome membrane. The protein resides in the late endosome membrane. It is found in the lysosome membrane. It carries out the reaction Zn(2+)(out) + 2 hydrogencarbonate(out) = Zn(2+)(in) + 2 hydrogencarbonate(in). The catalysed reaction is Mn(2+)(out) + 2 hydrogencarbonate(out) = Mn(2+)(in) + 2 hydrogencarbonate(in). The enzyme catalyses Fe(2+)(out) + 2 hydrogencarbonate(out) = Fe(2+)(in) + 2 hydrogencarbonate(in). It catalyses the reaction Cd(2+)(out) + 2 hydrogencarbonate(out) = Cd(2+)(in) + 2 hydrogencarbonate(in). Functionally, electroneutral transporter of the plasma membrane mediating the cellular uptake of the divalent metal cations zinc, manganese and iron that are important for tissue homeostasis, metabolism, development and immunity. Functions as an energy-dependent symporter, transporting through the membranes an electroneutral complex composed of a divalent metal cation and two bicarbonate anions. Beside these endogenous cellular substrates, can also import cadmium a non-essential metal which is cytotoxic and carcinogenic. Controls the cellular uptake by the intestinal epithelium of systemic zinc, which is in turn required to maintain tight junctions and the intestinal permeability. Modifies the activity of zinc-dependent phosphodiesterases, thereby indirectly regulating G protein-coupled receptor signaling pathways important for gluconeogenesis and chondrocyte differentiation. Regulates insulin receptor signaling, glucose uptake, glycogen synthesis and gluconeogenesis in hepatocytes through the zinc-dependent intracellular catabolism of insulin. Through zinc cellular uptake also plays a role in the adaptation of cells to endoplasmic reticulum stress. Major manganese transporter of the basolateral membrane of intestinal epithelial cells, it plays a central role in manganese systemic homeostasis through intestinal manganese uptake. Also involved in manganese extracellular uptake by cells of the blood-brain barrier. May also play a role in manganese and zinc homeostasis participating in their elimination from the blood through the hepatobiliary excretion. Also functions in the extracellular uptake of free iron. May also function intracellularly and mediate the transport from endosomes to cytosol of iron endocytosed by transferrin. Plays a role in innate immunity by regulating the expression of cytokines by activated macrophages. This Homo sapiens (Human) protein is Metal cation symporter ZIP14.